A 2772-amino-acid polypeptide reads, in one-letter code: MKLSESTINKDYPFLSEEEDSKIISLICNYLSLGQFELARALILQSQEKQQLKNQQKQTQSDNNNNNNNNNNNNNNNNNNNNCDRISSILYHTIRNGPPSTWLTSESIPSSPHLSWLCSIEFYQLNKDGFISSISEKTLLLVEFAILIYTLLGEQQNNDSRNIQPIIQELREYHYVLLSQQRQQSNNKNNNNNNIDNLSEQQIYQMESILLRSKLGNSTISILKTILINNTEFGRYIIKQFTNPFISSLNNNNNNNGISNSLLYSRYPVTQQLESLVAEVITLLIDSSQYNEAYNLLSIIDISNNDNSNSNNNNNNNNNNINSDEVDSNSGDNNIISKLLERVANLNNSNFGNNVEELTLLKIPFSSKLSNLETDNNNNNNNNNNNNNNNNNNNNNNNNNNNNNNNNNNNNNGKSISRLKIYESLLSNPTLTPLKTYLKHEESILKENSSQQQPIDFPECFEILKNYFSLKPKQLDINSKNNNNDNNNNNNNNSSSSGSNSSSSRNKNNLKNNLKSFDRKDSEYQNAESIFWYWYYHFLRVNDRHYLEYALEKSIDLIKNKRFEEALIVVKPFEKLLPLLILLCWDHFENDITSRKHLTNLLDLSKGISKFNKNNNNNNNNNNNNNNNNNNNNNNNNNNNNNNNNNNNNEWSCRRMIAVPNSPNGHSLIIGESTFDLLDEKSKTLRGSFSPSSMSPSIPPSASNDSSLTSSPYLLSLGRSMTTNISNAILSQLFHHSFIYVVKDCLPFITSNDILKFIEKDPDFPINYQQQQEQQEQQQQSNDSENLLSQIALDKLNDMNLVRGYYLIKNILKFFQYRATSTDAIVDKVEFDSVLDDVFDLFKGISNANISIGLIESLYLSLFLSNQDLKSNNNNTNDLGEISSSSSAFRLNNDFNYNNNSNNNDKPNNNEFYQYYKKVISNSSEENNLSYYLVNNNSHNNNNNNNNNNNNNNNNNNNNNNNNNNNNNNNNNNNNNNNNNSNNEINEQIIEIIDNEFSYQKLSKSQHKQYYITCVMLESLINKLITLIDFIVDSSLQQQQKQEIKKERIQILLLNLENLKHRVDLSKWILNLDDNNYNHIPFMSLVLMPIKSLILMAMRTNYPNFQIIIKYFDIPKDIENQAYQFKSIPDLLDVLENNGGGDNDDDGADINLNQLTTSFNGINNDNIFQILSDIVIGSNCNNSLIKKILKINNNNNNDNDNNNKSKSYLNWISILHKEYIDQISTTNSNSLYDILINPQSIPDKDYQNISKMKQYINNKKIIIKSLNRLIKCYDNTINNKNNNNNIDNNNNNNNNNNNNNNNNNNNNNNNNNNNNNNNNNNIEDDVKIIIENDNNISNNQILSTLFKYILSVNQIYSNCSDYSSIFRNINQSPKSILQDIVFNEKDYKKAEQLSNLLQVDLSDLIISSISHTTPKNPPSSLFKSSTPESSVLNSPIFYINNQQQQQQQLQLQQQQQQQQLQQQQQQQQQLQLQQQQQQQQQQQQQQQQQQQQQQQQQQQQQQQQQLTNDNIQKNYLTMDLVNYFDKSSKLLSSLVCMLKSPDHKDVEPFIQFSIENSKKLPSNSFSNWINEILKAHTFYHKYFNQQQNNNYNNNNYNNNYNNNNNNNNNNNNNNNNNNNIDNQQTINETFDYKLIQNSESIHQQQNFFFKIIQFFVNNNNLMDALKIADEYLEEGAPDWLLKLLVFKDRSQGYKYIRRMRDKPKALNLVLELYNNWDIATCIDMIVICKSFLGLPDQINQQQQPTTTTTTTIQDQQDENIKNELNHLHKAFLLYQSILNNANNGNVYRNWQEIKEICQNDPATMVRNLLDSKHYDLARKIRDHFSVSGIKKEIEERYLYYLLVEKDDASLALQTLSELGEESISILDSLLPVINEISVKLFLVQFLLSNMRSKLSKEKLEELTKQEIGYQVLLVLPTDLQVEYSQFINHPLLIIEMLIMNEKIPLVAKLLLDIKELKDVDDLLTYYARKALSFSRYLAKNDLMMLDDYLQKEFNDQDDYVSNNNYNKNDQINSKEKDKDKKRKSFLSNLPIITNKSSQTIKQSPSFEVEDFRHEISNRSSTPPPPPPTETPSLNIVHSTSPNSSVSLLKDKNIQQKWLLTGNDTVQDEKIRHSHFFIRSPSISLAKSLFDLCESKKKVYNTCIELYSNLSMLLSSNYSDDNLLIINLIQQLLMYTKLQLLRDPKSGGPTLVAVCDTYLGKVELFQSLVVSKCSGSMSLVDLSDPQKARQLRDRLIQEDRLRLAIDVATKCNIPADSAWVSWGISLIQTGSYSEAREKFKYCLTPTGPDRRVMSPSNSLSIDTIDSGVILNQIIQLLESPPSPNHSNFRSLYNYLLSTQGGGSSSNLKSTPKIDDSMFYNLLQPQLLNNSSNNSNNNNNTNNNNNNNNAITNLFSNAFSDKKSLTNNNSSSINNTTIINNIEMDKNRLDEAIYYLKKYGNGRMLVNFLIKHNLYELACKTILSDSLSFNIFYDEIVLKAIANSSLQDLFNTIKSIDPKLLAFQDHLLASCKNMNERKQYQLLFEFQLYMGDNVRAGLTCVKMFLTNPEGTANSRVHHLEQALYYFNIGLTNYVKGCVLSQPEINNYIQNCTTQLEISKFFYKSSSVFPTTSPVHKLSIFGTIKQKTELVEQLTINGNFDLGFKIAQESKLTLPPIYVNALTTMARKKMSSKIEDYLNQLRGCINPEDWELIAMPVFETQCLELKEFKSAEKFIPKLYTVYNSVRISILCGKLKTAYLTAVQHKDRSLIKMVMDEAQKTNQPVIFKWCQEILNQ.

Disordered regions lie at residues 50-82, 371-415, 475-514, 612-650, 685-708, and 933-982; these read QQLKNQQKQTQSDNNNNNNNNNNNNNNNNNNNN, NLET…NGKS, LDINSKNNNNDNNNNNNNNSSSSGSNSSSSRNKNNLKNNL, NKNNNNNNNNNNNNNNNNNNNNNNNNNNNNNNNNNNNNE, LRGSFSPSSMSPSIPPSASNDSSL, and LVNN…NNSN. 4 stretches are compositionally biased toward low complexity: residues 376–412, 478–514, 614–649, and 688–708; these read NNNNNNNNNNNNNNNNNNNNNNNNNNNNNNNNNNNNN, NSKNNNNDNNNNNNNNSSSSGSNSSSSRNKNNLKNNL, NNNNNNNNNNNNNNNNNNNNNNNNNNNNNNNNNNNN, and SFSPSSMSPSIPPSASNDSSL. The stretch at 1065–1089 is one LRR 1 repeat; the sequence is LSKWILNLDDNNYNHIPFMSLVLMP. Positions 1282–1319 are disordered; the sequence is NNNNIDNNNNNNNNNNNNNNNNNNNNNNNNNNNNNNNN. LRR repeat units follow at residues 1393-1416 and 1543-1567; these read LSNLLQVDLSDLIISSISHTTPKN and HKDVEPFIQFSIENSKKLPSNSFSN. Low complexity predominate over residues 1587 to 1619; sequence QNNNYNNNNYNNNYNNNNNNNNNNNNNNNNNNN. The tract at residues 1587 to 1622 is disordered; the sequence is QNNNYNNNNYNNNYNNNNNNNNNNNNNNNNNNNIDN. The stretch at 1899–1922 is one LRR 4 repeat; sequence LEELTKQEIGYQVLLVLPTDLQVE. Polar residues-rich tracts occupy residues 1999 to 2011 and 2073 to 2083; these read YVSNNNYNKNDQI and LNIVHSTSPNS. Disordered stretches follow at residues 1999-2021, 2054-2083, and 2367-2386; these read YVSNNNYNKNDQINSKEKDKDKK, EISNRSSTPPPPPPTETPSLNIVHSTSPNS, and NNSSNNSNNNNNTNNNNNNN. One copy of the LRR 5 repeat lies at 2414-2439; it reads TTIINNIEMDKNRLDEAIYYLKKYGN.

The sequence is that of Protein DDB_G0276689 from Dictyostelium discoideum (Social amoeba).